The chain runs to 878 residues: Leucine--tRNA ligase (878 aa).

Over residues 1–14 (MTASKSSSATASAS) the composition is skewed to low complexity. The tract at residues 1-23 (MTASKSSSATASASDRPDRYDPI) is disordered. A 'HIGH' region motif is present at residues 58–68 (PYPSGSLHMGH). Positions 632–636 (KMSKS) match the 'KMSKS' region motif. Lys635 is an ATP binding site.

The protein belongs to the class-I aminoacyl-tRNA synthetase family.

It localises to the cytoplasm. The enzyme catalyses tRNA(Leu) + L-leucine + ATP = L-leucyl-tRNA(Leu) + AMP + diphosphate. This chain is Leucine--tRNA ligase, found in Synechococcus sp. (strain WH7803).